We begin with the raw amino-acid sequence, 338 residues long: Phenylalanine--tRNA ligase alpha subunit (338 aa).

Mg(2+) is bound at residue Glu-252.

Belongs to the class-II aminoacyl-tRNA synthetase family. Phe-tRNA synthetase alpha subunit type 1 subfamily. As to quaternary structure, tetramer of two alpha and two beta subunits. It depends on Mg(2+) as a cofactor.

The protein localises to the cytoplasm. The enzyme catalyses tRNA(Phe) + L-phenylalanine + ATP = L-phenylalanyl-tRNA(Phe) + AMP + diphosphate + H(+). The polypeptide is Phenylalanine--tRNA ligase alpha subunit (Pseudomonas entomophila (strain L48)).